A 192-amino-acid chain; its full sequence is Elongation factor P (192 aa).

The protein belongs to the elongation factor P family.

The protein localises to the cytoplasm. Its pathway is protein biosynthesis; polypeptide chain elongation. In terms of biological role, involved in peptide bond synthesis. Stimulates efficient translation and peptide-bond synthesis on native or reconstituted 70S ribosomes in vitro. Probably functions indirectly by altering the affinity of the ribosome for aminoacyl-tRNA, thus increasing their reactivity as acceptors for peptidyl transferase. This is Elongation factor P from Borrelia turicatae (strain 91E135).